A 173-amino-acid chain; its full sequence is Small ribosomal subunit protein mS25 (173 aa).

Belongs to the mitochondrion-specific ribosomal protein mS25 family. Component of the mitochondrial ribosome small subunit (28S) which comprises a 12S rRNA and about 30 distinct proteins.

The protein resides in the mitochondrion. This Bos taurus (Bovine) protein is Small ribosomal subunit protein mS25 (MRPS25).